Reading from the N-terminus, the 535-residue chain is Suppressor of cytokine signaling 6 (535 aa).

Basic residues predominate over residues 80-89 (RLSAKQKSKG). The tract at residues 80 to 105 (RLSAKQKSKGKAGTPSGSSADEDTFS) is disordered. An SH2 domain is found at 384-491 (WYWGPITRWE…TYPVRLTNPV (108 aa)). The SOCS box domain maps to 486–535 (RLTNPVSRFMQVRSLQYLCRFVIRQYTRIDLIQKLPLPNKMKDYLQEKHY).

Interacts with RBCK1. Interacts with phosphorylated IRS4. Interacts with PIM3. Interacts with KIT (phosphorylated).

The protein operates within protein modification; protein ubiquitination. In terms of biological role, SOCS family proteins form part of a classical negative feedback system that regulates cytokine signal transduction. May be a substrate recognition component of a SCF-like ECS (Elongin BC-CUL2/5-SOCS-box protein) E3 ubiquitin-protein ligase complex which mediates the ubiquitination and subsequent proteasomal degradation of target proteins. Regulates KIT degradation by ubiquitination of the tyrosine-phosphorylated receptor. The protein is Suppressor of cytokine signaling 6 (SOCS6) of Homo sapiens (Human).